The chain runs to 85 residues: Small ribosomal subunit protein bS20 (85 aa).

It belongs to the bacterial ribosomal protein bS20 family.

In terms of biological role, binds directly to 16S ribosomal RNA. This Lactobacillus johnsonii (strain CNCM I-12250 / La1 / NCC 533) protein is Small ribosomal subunit protein bS20.